Here is a 342-residue protein sequence, read N- to C-terminus: D-erythrose-4-phosphate dehydrogenase (342 aa).

An NAD(+)-binding site is contributed by 12–13 (RI). Substrate-binding positions include 154-156 (SCT), Arg-200, 213-214 (TK), and Arg-236. Residue Cys-155 is the Nucleophile of the active site. Residue Asn-318 coordinates NAD(+).

This sequence belongs to the glyceraldehyde-3-phosphate dehydrogenase family. Epd subfamily. In terms of assembly, homotetramer.

The protein resides in the cytoplasm. It carries out the reaction D-erythrose 4-phosphate + NAD(+) + H2O = 4-phospho-D-erythronate + NADH + 2 H(+). It functions in the pathway cofactor biosynthesis; pyridoxine 5'-phosphate biosynthesis; pyridoxine 5'-phosphate from D-erythrose 4-phosphate: step 1/5. Functionally, catalyzes the NAD-dependent conversion of D-erythrose 4-phosphate to 4-phosphoerythronate. The sequence is that of D-erythrose-4-phosphate dehydrogenase from Salmonella arizonae (strain ATCC BAA-731 / CDC346-86 / RSK2980).